The following is a 396-amino-acid chain: L-lactate dehydrogenase (396 aa).

In terms of domain architecture, FMN hydroxy acid dehydrogenase spans 1-380; that stretch reads MIISAASDYR…TQDSLVQGLG (380 aa). Tyr-24 serves as a coordination point for substrate. Residues Ser-106 and Gln-127 each contribute to the FMN site. Tyr-129 serves as a coordination point for substrate. Thr-155 is an FMN binding site. Arg-164 lines the substrate pocket. Position 251 (Lys-251) interacts with FMN. Residue His-275 is the Proton acceptor of the active site. A substrate-binding site is contributed by Arg-278. 306–330 lines the FMN pocket; it reads DSGIRNGLDVVRMIALGADTVLLGR.

Belongs to the FMN-dependent alpha-hydroxy acid dehydrogenase family. The cofactor is FMN.

It is found in the cell inner membrane. It carries out the reaction (S)-lactate + A = pyruvate + AH2. In terms of biological role, catalyzes the conversion of L-lactate to pyruvate. Is coupled to the respiratory chain. In Escherichia coli O7:K1 (strain IAI39 / ExPEC), this protein is L-lactate dehydrogenase.